A 614-amino-acid chain; its full sequence is Probable LRR receptor-like serine/threonine-protein kinase At5g63710 (614 aa).

Positions 1 to 50 (MAHSGNGESFHDPLRGFIQRNCFRWNNQKLILQCFMALAFVGITSSTTQP) are cleaved as a signal peptide. Residues 51–224 (DIEGGALLQL…VTSSKKKLRD (174 aa)) lie on the Extracellular side of the membrane. Asparagine 65, asparagine 125, asparagine 146, and asparagine 175 each carry an N-linked (GlcNAc...) asparagine glycan. LRR repeat units lie at residues 115-139 (LKFL…LGNM), 141-163 (NLQT…WSQL), and 164-187 (SNLK…FFSI). The chain crosses the membrane as a helical span at residues 225 to 245 (ITLTASCVASIILFLGAMVMY). At 246–613 (HHHRVRRTKY…DQESIRLSTA (368 aa)) the chain is on the cytoplasmic side. Phosphothreonine is present on threonine 286. The Protein kinase domain maps to 289 to 573 (FNESNLIGQG…GTGGLAEKWT (285 aa)). 295-303 (IGQGGFGKV) contributes to the ATP binding site. Threonine 312 carries the post-translational modification Phosphothreonine. Lysine 317 lines the ATP pocket. Serine 370 carries the phosphoserine modification. Threonine 389 is subject to Phosphothreonine. Aspartate 416 serves as the catalytic Proton acceptor. Phosphothreonine is present on residues threonine 449, threonine 450, and threonine 455. Tyrosine 463 bears the Phosphotyrosine mark. Threonine 466 carries the post-translational modification Phosphothreonine. Serine 470 bears the Phosphoserine mark. Threonine 545 is modified (phosphothreonine).

It belongs to the protein kinase superfamily. Ser/Thr protein kinase family.

It localises to the cell membrane. The catalysed reaction is L-seryl-[protein] + ATP = O-phospho-L-seryl-[protein] + ADP + H(+). The enzyme catalyses L-threonyl-[protein] + ATP = O-phospho-L-threonyl-[protein] + ADP + H(+). In Arabidopsis thaliana (Mouse-ear cress), this protein is Probable LRR receptor-like serine/threonine-protein kinase At5g63710.